The primary structure comprises 637 residues: Serine protease Hayan (637 aa).

The N-terminal stretch at 1-26 (MAMISARRYFLLGLLVLTTSAYVTVG) is a signal peptide. Positions 31–79 (PCQVRSDIPGICLSSSACENIRGYLKSGTLSTSQVPSCGFGAREEIICC) constitute a Clip domain. 3 disulfides stabilise this stretch: Cys-32–Cys-78, Cys-42–Cys-68, and Cys-48–Cys-79. Disordered regions lie at residues 95–137 (FHAT…LDEN), 152–178 (KPQKTHESLKLPTQESMKTPTHESMKM), 216–260 (QRSF…NNNN), and 286–365 (LQTT…EKER). Residues 125 to 136 (EGKRERESRLDE) are compositionally biased toward basic and acidic residues. A compositionally biased stretch (polar residues) spans 234–244 (PLTTPRSRPQR). Positions 245-260 (PNNSNFNTNPSPNNNN) are enriched in low complexity. The span at 306 to 320 (EPYRFRGQDRDKDTQ) shows a compositional bias: basic and acidic residues. The segment covering 321–332 (PQEPWNDVSNNL) has biased composition (polar residues). 4 cysteine pairs are disulfide-bonded: Cys-371-Cys-497, Cys-414-Cys-430, Cys-543-Cys-567, and Cys-578-Cys-609. The 248-residue stretch at 385-632 (ILDGERVDRG…FLDYIEGIVW (248 aa)) folds into the Peptidase S1 domain. Residues His-429 and Asp-477 each act as charge relay system in the active site. Ser-582 acts as the Charge relay system in catalysis.

This sequence belongs to the peptidase S1 family. CLIP subfamily.

The protein resides in the secreted. Functionally, serine protease which, by converting prophenoloxidase 1 (PPO1) into its active form, plays an essential role in the melanization immune response to physical or septic wounding. May function in diverse PPO1-activating cascades that are negatively controlled by different serpin proteins; Spn27A and Spn28D in the hemolymph, and Spn28D and Spn77BA in the trachea. Also required in the systematic wound response by mediating the redox-dependent activation of the JNK cytoprotective cascade in neuronal tissues after integument wounding. This chain is Serine protease Hayan, found in Drosophila melanogaster (Fruit fly).